Consider the following 406-residue polypeptide: Tyrosine--tRNA ligase (406 aa).

L-tyrosine is bound at residue tyrosine 35. Positions 40 to 49 (PTADSLHVGH) match the 'HIGH' region motif. Tyrosine 168 and glutamine 172 together coordinate L-tyrosine. The 'KMSKS' region signature appears at 228–232 (KMGKT). Lysine 231 is an ATP binding site. The 65-residue stretch at 340-404 (LPILDVMAST…RGKKNYNKIE (65 aa)) folds into the S4 RNA-binding domain.

Belongs to the class-I aminoacyl-tRNA synthetase family. TyrS type 1 subfamily. Homodimer.

Its subcellular location is the cytoplasm. It catalyses the reaction tRNA(Tyr) + L-tyrosine + ATP = L-tyrosyl-tRNA(Tyr) + AMP + diphosphate + H(+). Its function is as follows. Catalyzes the attachment of tyrosine to tRNA(Tyr) in a two-step reaction: tyrosine is first activated by ATP to form Tyr-AMP and then transferred to the acceptor end of tRNA(Tyr). This chain is Tyrosine--tRNA ligase, found in Clostridium beijerinckii (strain ATCC 51743 / NCIMB 8052) (Clostridium acetobutylicum).